A 344-amino-acid polypeptide reads, in one-letter code: MVFSFQDDTALTVALNSIKLVKNPEELIPGLIPTNPKTGIFYIAAEITNSNNFFKWGTDSNREIIKGQMYFLKKETKIPTIRTYLFQMRTHKIALNANDVWFQANNDKVKVIVDGIELDQFDPKLPNVAFFNDYQVDLVSTLTLADKQLLIRRLNLALVGMNLMVDEQATNIETFPKQIRLTTKSIDQSFDFDVEFNPKASELNVIVKVDEQPLFKLDYELVIKNSNTLQLVNRNKHLGMYIWSVADQRYQAKLLDTLQLFLQSKQMYLKEKIPLKLQDNTATFKIAKQAQPNNGENKNTNFIGYLVIAASSLFLVVVAFSFYFYKRKKNLKSHKQKAVVKTDK.

Belongs to the MG414/MG415 family.

This is an uncharacterized protein from Mycoplasma pneumoniae (strain ATCC 29342 / M129 / Subtype 1) (Mycoplasmoides pneumoniae).